A 122-amino-acid chain; its full sequence is Large ribosomal subunit protein uL18 (122 aa).

Residues 1–26 (MSNLSRKQQTQKRHRRLRRHLKGTAQ) form a disordered region. The span at 9-22 (QTQKRHRRLRRHLK) shows a compositional bias: basic residues.

The protein belongs to the universal ribosomal protein uL18 family. In terms of assembly, part of the 50S ribosomal subunit; part of the 5S rRNA/L5/L18/L25 subcomplex. Contacts the 5S and 23S rRNAs.

Functionally, this is one of the proteins that bind and probably mediate the attachment of the 5S RNA into the large ribosomal subunit, where it forms part of the central protuberance. In Prochlorococcus marinus (strain MIT 9313), this protein is Large ribosomal subunit protein uL18.